A 66-amino-acid polypeptide reads, in one-letter code: uncharacterized protein (66 aa).

The signal sequence occupies residues 1–25 (MIVIILLFISIIVFLSVIQPQPSKN). The span at 21–31 (QPSKNKSRQQA) shows a compositional bias: polar residues. The segment at 21–66 (QPSKNKSRQQADSGYFGYSDHSSHHDGCSSDGGFSDSGCGGGGGGD) is disordered.

This is an uncharacterized protein from Bacillus subtilis (strain 168).